The following is a 332-amino-acid chain: Melanocortin receptor 4 (332 aa).

Topologically, residues 1–43 are extracellular; it reads MNSTHHHGMHTSLHFWNRSTYGLHSNASEPLGKGYSEGGCYEQ. Residues N2, N17, and N26 are each glycosylated (N-linked (GlcNAc...) asparagine). Intrachain disulfides connect C40/C279 and C271/C277. A helical transmembrane segment spans residues 44-69; the sequence is LFVSPEVFVTLGVISLLENILVIVAI. At 70 to 81 the chain is on the cytoplasmic side; sequence AKNKNLHSPMYF. The chain crosses the membrane as a helical span at residues 82 to 106; it reads FICSLAVADMLVSVSNGSETIVITL. Residues E100, D122, and D126 each contribute to the Ca(2+) site. The Extracellular portion of the chain corresponds to 107-123; sequence LNSTDTDAQSFTVNIDN. Residues 124-145 traverse the membrane as a helical segment; it reads VIDSVICSSLLASICSLLSIAV. Residues 146–165 are Cytoplasmic-facing; that stretch reads DRYFTIFYALQYHNIMTVKR. A helical membrane pass occupies residues 166–186; that stretch reads VGIIISCIWAVCTVSGVLFII. At 187–191 the chain is on the extracellular side; that stretch reads YSDSS. Residues 192–215 form a helical membrane-spanning segment; the sequence is AVIICLITVFFTMLALMASLYVHM. The Cytoplasmic portion of the chain corresponds to 216 to 248; it reads FLMARLHIKRIAVLPGTGTIRQGANMKGAITLT. A helical transmembrane segment spans residues 249-271; it reads ILIGVFVVCWAPFFLHLIFYISC. At 272–280 the chain is on the extracellular side; sequence PQNPYCVCF. The helical transmembrane segment at 281–304 threads the bilayer; that stretch reads MSHFNLYLILIMCNSIIDPLIYAL. The Cytoplasmic portion of the chain corresponds to 305–332; it reads RSQELRKTFKEIICCYPLGGLCDLSSRY. The S-palmitoyl cysteine moiety is linked to residue C318.

Belongs to the G-protein coupled receptor 1 family. Homodimer; disulfide-linked, also forms higher order oligomers. Interacts with GNAS. Interacts with ATRNL1. Interacts with MGRN1; this interaction competes with GNAS-binding and thus inhibits agonist-induced cAMP production. Interacts with MRAP and MRAP2; these associated factors increase ligand-sensitivity and generation of cAMP.

The protein resides in the cell membrane. Hormone receptor that acts as a key component of the leptin-melanocortin pathway at the intersection of homeostatic maintenance of energetic state. Plays a role in regulating food intake: activation by a stimulating hormone such as anorexigenic alpha-melanocyte stimulating hormone (alpha-MSH) inhibits appetite, whereas binding to a natural antagonist like Agouti-related protein/AGRP promotes appetite. G-protein-coupled receptor that activates conventional Galphas signaling leading to induction of anorexogenic signaling in the hypothalamus to result in negative energy balance. Regulates the firing activity of neurons from the hypothalamus by alpha-MSH and AGRP independently of Galphas signaling by ligand-induced coupling of closure of inwardly rectifying potassium channel KCNJ13. In intestinal epithelial cells, plays a role in the inhibition of hepatic glucose production via nesfatin-1/NUCB2 leading to increased cyclic adenosine monophosphate (cAMP) levels and glucagon-like peptide 1 (GLP-1) secretion in the intestinal epithelium. This chain is Melanocortin receptor 4 (MC4R), found in Sus scrofa (Pig).